Here is a 149-residue protein sequence, read N- to C-terminus: Transcriptional regulator MraZ (149 aa).

SpoVT-AbrB domains follow at residues 6–52 and 81–124; these read RSHR…PLPD and AELM…DQGR.

Belongs to the MraZ family. Forms oligomers.

It localises to the cytoplasm. It is found in the nucleoid. This Nitratidesulfovibrio vulgaris (strain DSM 19637 / Miyazaki F) (Desulfovibrio vulgaris) protein is Transcriptional regulator MraZ.